The chain runs to 24 residues: Humanin-like 6 (24 aa).

This sequence belongs to the humanin family. Expressed in skeletal muscle and testis.

It is found in the secreted. Its subcellular location is the cytoplasm. Plays a role as a neuroprotective and antiapoptotic factor. This Homo sapiens (Human) protein is Humanin-like 6.